The primary structure comprises 547 residues: Chaperonin GroEL (547 aa).

Residues 30–33 (TLGP), Lys-51, 87–91 (DGTTT), Gly-415, and Asp-496 contribute to the ATP site. Residues 525–547 (KPEPKSPAGGPGMGGMGGMDGMM) are disordered. Over residues 533–547 (GGPGMGGMGGMDGMM) the composition is skewed to gly residues.

This sequence belongs to the chaperonin (HSP60) family. As to quaternary structure, forms a cylinder of 14 subunits composed of two heptameric rings stacked back-to-back. Interacts with the co-chaperonin GroES.

Its subcellular location is the cytoplasm. The catalysed reaction is ATP + H2O + a folded polypeptide = ADP + phosphate + an unfolded polypeptide.. Functionally, together with its co-chaperonin GroES, plays an essential role in assisting protein folding. The GroEL-GroES system forms a nano-cage that allows encapsulation of the non-native substrate proteins and provides a physical environment optimized to promote and accelerate protein folding. This Cereibacter sphaeroides (strain ATCC 17029 / ATH 2.4.9) (Rhodobacter sphaeroides) protein is Chaperonin GroEL.